The sequence spans 156 residues: Ribosomal RNA large subunit methyltransferase H (156 aa).

Residues leucine 73, glycine 104, and 123–128 contribute to the S-adenosyl-L-methionine site; that span reads LSKLTL.

Belongs to the RNA methyltransferase RlmH family. Homodimer.

It localises to the cytoplasm. The enzyme catalyses pseudouridine(1915) in 23S rRNA + S-adenosyl-L-methionine = N(3)-methylpseudouridine(1915) in 23S rRNA + S-adenosyl-L-homocysteine + H(+). Functionally, specifically methylates the pseudouridine at position 1915 (m3Psi1915) in 23S rRNA. The polypeptide is Ribosomal RNA large subunit methyltransferase H (Hydrogenovibrio crunogenus (strain DSM 25203 / XCL-2) (Thiomicrospira crunogena)).